Consider the following 200-residue polypeptide: uncharacterized protein (200 aa).

The Response regulatory domain maps to 3 to 119 (RLFIAEDQRM…DLADAIRKCV (117 aa)). The residue at position 54 (aspartate 54) is a 4-aspartylphosphate. Residues 133–198 (MMRDENPLTV…EAASIAEEKG (66 aa)) enclose the HTH luxR-type domain. A DNA-binding region (H-T-H motif) is located at residues 157–176 (TKDITLELYLSQGTVRNYIS).

In terms of processing, phosphorylated by YvfT.

Its subcellular location is the cytoplasm. In terms of biological role, member of the two-component regulatory system YvfT/YvfU. This is an uncharacterized protein from Bacillus subtilis (strain 168).